The primary structure comprises 189 residues: MTIDEKMLKEQLVTITEEVITAGNLKKGDLFVLGCTTSEVVGGVIGKNSSAEVGQWIVSTLIEQLDKKGISLAVQGCEHINRALAMERRVAEEKGFEIVSVVPQLHAGGSCSVAAFEKFDEPVEVEHIVAQAGIDIGDTSIGMHVKHVQVPLRLSIRTLGAAHVTALYSRPKYIGGPRAHYETTQERNR.

It belongs to the UPF0340 family.

This is UPF0340 protein EF_1967 from Enterococcus faecalis (strain ATCC 700802 / V583).